Reading from the N-terminus, the 257-residue chain is Galactitol 2-dehydrogenase (257 aa).

NAD(+) contacts are provided by residues 21–23, 67–68, Asn94, Tyr162, and Lys166; these read RAI and DV. Tyr162 acts as the Proton acceptor in catalysis.

It belongs to the short-chain dehydrogenases/reductases (SDR) family. In terms of assembly, homotetramer. It depends on Mg(2+) as a cofactor.

It carries out the reaction galactitol + NAD(+) = keto-D-tagatose + NADH + H(+). In terms of biological role, catalyzes the oxidation of galactitol to D-tagatose. Also catalyzes the oxidation of a wide range of substrates, including polyvalent aliphatic alcohols and polyols, to the corresponding ketones and ketoses. Galactitol is the preferred substrate. This Rhizobium johnstonii (strain DSM 114642 / LMG 32736 / 3841) (Rhizobium leguminosarum bv. viciae) protein is Galactitol 2-dehydrogenase.